Consider the following 211-residue polypeptide: MSKFQVVEHPLIQHKLSILRRKEASTKEFRELVDEIGMLMAYEVSRDLPLEDVEIETPVQKTTVKQIAGKKLAIVPILRAGIGMVDGILKLIPAARVGHIGMYRDEETLKPVEYLVKLPADIADRQIFLVDPMLATGGSAILAVDSLKKRNSKAENIKFVCLVAAPEGVKALQEAHPDIEIYTAALDEKLNEHGYIVPGLGDAGDRLFGTK.

Residues R79, R104, and 131-139 (DPMLATGGS) contribute to the 5-phospho-alpha-D-ribose 1-diphosphate site. Residues I196 and 201–203 (GDA) each bind uracil. D202 contacts 5-phospho-alpha-D-ribose 1-diphosphate.

This sequence belongs to the UPRTase family. The cofactor is Mg(2+).

The enzyme catalyses UMP + diphosphate = 5-phospho-alpha-D-ribose 1-diphosphate + uracil. Its pathway is pyrimidine metabolism; UMP biosynthesis via salvage pathway; UMP from uracil: step 1/1. Its activity is regulated as follows. Allosterically activated by GTP. In terms of biological role, catalyzes the conversion of uracil and 5-phospho-alpha-D-ribose 1-diphosphate (PRPP) to UMP and diphosphate. This is Uracil phosphoribosyltransferase from Lactococcus lactis subsp. cremoris (strain SK11).